A 227-amino-acid polypeptide reads, in one-letter code: Lectin (227 aa).

Residues 1–28 (MTMTSTTTKAMAMAAAVLAAAAVAATNA) form the signal peptide. Gln29 is modified (pyrrolidone carboxylic acid). Chitin-binding type-1 domains are found at residues 29–70 (QTCG…ACCS), 71–113 (SQRC…PCRA), 114–156 (DIKC…ACCP), and 157–199 (EKRC…GCYK). Intrachain disulfides connect Cys31–Cys46, Cys40–Cys52, Cys45–Cys59, Cys63–Cys68, Cys74–Cys89, Cys83–Cys95, Cys88–Cys102, Cys106–Cys111, Cys117–Cys132, Cys126–Cys138, Cys131–Cys145, Cys149–Cys154, Cys160–Cys175, Cys169–Cys181, Cys174–Cys188, and Cys192–Cys197. 38–40 (MIC) contributes to the substrate binding site. 90 to 101 (SQYGYCGFGSEY) is a substrate binding site. 142 to 143 (SE) contacts substrate. A propeptide spanning residues 202 to 227 (DGMAAILANNQSVSFEGIIESVAELV) is cleaved from the precursor. A glycan (N-linked (GlcNAc...) asparagine) is linked at Asn211.

N-acetyl-D-glucosamine binding lectin. The polypeptide is Lectin (Oryza sativa subsp. indica (Rice)).